We begin with the raw amino-acid sequence, 252 residues long: MGSELIGRLAPRLGLAEPDMLRKAEEYLRLSRVKCVGLSARTTETSSAVMCLDLAASWMKCPLDRAYLIKLSGLNKETYQSCLKSFECLLGLNSNIGIRDLAVQFSCIEAVNMASKILKSYESSLPQTQQVDLDLSRPLFTSAALLSACKILKLKVDKNKMVATSGVKKAIFDRLCKQLEKIGQQVDREPGDVATPPRKRKKIVVEAPAKEMEKVEEMPHKPQKDEDLTQDYEEWKRKILENAASAQKATAE.

The tract at residues 188 to 232 is disordered; sequence REPGDVATPPRKRKKIVVEAPAKEMEKVEEMPHKPQKDEDLTQDY. A Phosphothreonine modification is found at Thr195. Positions 208-232 are enriched in basic and acidic residues; that stretch reads PAKEMEKVEEMPHKPQKDEDLTQDY. Lys210 participates in a covalent cross-link: Glycyl lysine isopeptide (Lys-Gly) (interchain with G-Cter in SUMO2). Thr229 is modified (phosphothreonine).

This sequence belongs to the ORC6 family. In terms of assembly, component of ORC, a complex composed of at least 6 subunits: ORC1, ORC2, ORC3, ORC4, ORC5 and ORC6. ORC is regulated in a cell-cycle dependent manner. It is sequentially assembled at the exit from anaphase of mitosis and disassembled as cells enter S phase. Interacts with DBF4.

It is found in the nucleus. Component of the origin recognition complex (ORC) that binds origins of replication. DNA-binding is ATP-dependent. The specific DNA sequences that define origins of replication have not been identified yet. ORC is required to assemble the pre-replication complex necessary to initiate DNA replication. Does not bind histone H3 and H4 trimethylation marks H3K9me3, H3K27me3 and H4K20me3. This chain is Origin recognition complex subunit 6 (ORC6), found in Homo sapiens (Human).